The chain runs to 107 residues: MIVNGIGALNLKPGLGDTATDLIQGGVAPATSGNLGTSFAEAVSQAASKTVNTLQNAEQVSLQALKGDADTRQVVDAVMSAQQALQTAVAIRDKVVSAYLEVSRMGI.

The protein belongs to the FliE family.

The protein resides in the bacterial flagellum basal body. This Mesorhizobium japonicum (strain LMG 29417 / CECT 9101 / MAFF 303099) (Mesorhizobium loti (strain MAFF 303099)) protein is Flagellar hook-basal body complex protein FliE.